Reading from the N-terminus, the 242-residue chain is Proteasome subunit alpha (242 aa).

The protein belongs to the peptidase T1A family. The 20S proteasome core is composed of 14 alpha and 14 beta subunits that assemble into four stacked heptameric rings, resulting in a barrel-shaped structure. The two inner rings, each composed of seven catalytic beta subunits, are sandwiched by two outer rings, each composed of seven alpha subunits. The catalytic chamber with the active sites is on the inside of the barrel. Has a gated structure, the ends of the cylinder being occluded by the N-termini of the alpha-subunits. Is capped at one or both ends by the proteasome regulatory ATPase, PAN.

The protein resides in the cytoplasm. The formation of the proteasomal ATPase PAN-20S proteasome complex, via the docking of the C-termini of PAN into the intersubunit pockets in the alpha-rings, triggers opening of the gate for substrate entry. Interconversion between the open-gate and close-gate conformations leads to a dynamic regulation of the 20S proteasome proteolysis activity. In terms of biological role, component of the proteasome core, a large protease complex with broad specificity involved in protein degradation. The chain is Proteasome subunit alpha from Sulfurisphaera tokodaii (strain DSM 16993 / JCM 10545 / NBRC 100140 / 7) (Sulfolobus tokodaii).